The sequence spans 504 residues: Glutamate--tRNA ligase (504 aa).

Positions 10 to 20 match the 'HIGH' region motif; sequence PSPTGDPHVGT. A 'KMSKS' region motif is present at residues 251 to 255; sequence KLSKR. Position 254 (lysine 254) interacts with ATP.

This sequence belongs to the class-I aminoacyl-tRNA synthetase family. Glutamate--tRNA ligase type 1 subfamily. As to quaternary structure, monomer.

It is found in the cytoplasm. The catalysed reaction is tRNA(Glu) + L-glutamate + ATP = L-glutamyl-tRNA(Glu) + AMP + diphosphate. Its function is as follows. Catalyzes the attachment of glutamate to tRNA(Glu) in a two-step reaction: glutamate is first activated by ATP to form Glu-AMP and then transferred to the acceptor end of tRNA(Glu). In Cellvibrio japonicus (strain Ueda107) (Pseudomonas fluorescens subsp. cellulosa), this protein is Glutamate--tRNA ligase.